The primary structure comprises 185 residues: Ribosome-recycling factor (185 aa).

It belongs to the RRF family.

The protein localises to the cytoplasm. Functionally, responsible for the release of ribosomes from messenger RNA at the termination of protein biosynthesis. May increase the efficiency of translation by recycling ribosomes from one round of translation to another. This chain is Ribosome-recycling factor, found in Syntrophus aciditrophicus (strain SB).